We begin with the raw amino-acid sequence, 135 residues long: Protein PsiE homolog (135 aa).

4 helical membrane-spanning segments follow: residues 13-33, 54-74, 82-102, and 107-127; these read VLQW…VIFL, YMLV…ALIV, HFPL…LIIV, and PNDT…LYLA.

It belongs to the PsiE family.

It localises to the cell inner membrane. The polypeptide is Protein PsiE homolog (Edwardsiella ictaluri (strain 93-146)).